We begin with the raw amino-acid sequence, 273 residues long: Dermonecrotic toxin LhSicTox-alphaIA2av (273 aa).

His5 is an active-site residue. Positions 25 and 27 each coordinate Mg(2+). The Nucleophile role is filled by His41. Disulfide bonds link Cys45/Cys51 and Cys47/Cys190. A Mg(2+)-binding site is contributed by Asp85.

It belongs to the arthropod phospholipase D family. Class II subfamily. The cofactor is Mg(2+). In terms of tissue distribution, expressed by the venom gland.

The protein resides in the secreted. The enzyme catalyses an N-(acyl)-sphingosylphosphocholine = an N-(acyl)-sphingosyl-1,3-cyclic phosphate + choline. It carries out the reaction an N-(acyl)-sphingosylphosphoethanolamine = an N-(acyl)-sphingosyl-1,3-cyclic phosphate + ethanolamine. It catalyses the reaction a 1-acyl-sn-glycero-3-phosphocholine = a 1-acyl-sn-glycero-2,3-cyclic phosphate + choline. The catalysed reaction is a 1-acyl-sn-glycero-3-phosphoethanolamine = a 1-acyl-sn-glycero-2,3-cyclic phosphate + ethanolamine. In terms of biological role, dermonecrotic toxins cleave the phosphodiester linkage between the phosphate and headgroup of certain phospholipids (sphingolipid and lysolipid substrates), forming an alcohol (often choline) and a cyclic phosphate. This toxin acts on sphingomyelin (SM). It may also act on ceramide phosphoethanolamine (CPE), lysophosphatidylcholine (LPC) and lysophosphatidylethanolamine (LPE), but not on lysophosphatidylserine (LPS), and lysophosphatidylglycerol (LPG). It acts by transphosphatidylation, releasing exclusively cyclic phosphate products as second products. Induces dermonecrosis, hemolysis, increased vascular permeability, edema, inflammatory response, and platelet aggregation. The sequence is that of Dermonecrotic toxin LhSicTox-alphaIA2av from Loxosceles hirsuta (Recluse spider).